A 423-amino-acid polypeptide reads, in one-letter code: F-box/LRR-repeat protein 2 (423 aa).

Positions 9–55 constitute an F-box domain; that stretch reads GLINKKLPKELLLRIFSFLDIVTLCRCAQISKAWNILALDGSNWQRI. LRR repeat units follow at residues 61–87, 88–113, 114–139, 140–165, 166–191, 192–217, 218–243, 244–269, 270–295, 296–321, 322–350, 351–375, and 376–401; these read QTDV…SLRG, CIGV…NLNG, CTKI…DLTS, CVSI…NLSW, CDQI…LLRG, CTQL…NLQS, CSRV…CLSG, CGSL…EAAR, CSHL…DLEE, CILI…SLSH, CELI…ELDN, CLLI…ELYD, and CQQV…AYFA. Positions 80–90 are interaction with Calmodulin; sequence LRKLSLRGCIG. Lys201 is covalently cross-linked (Glycyl lysine isopeptide (Lys-Gly) (interchain with G-Cter in ubiquitin)). At Thr404 the chain carries Phosphothreonine. Residue Cys420 is the site of S-geranylgeranyl cysteine attachment. Positions 420–423 match the CAAX motif motif; the sequence is CVIL.

As to quaternary structure, part of the SCF (SKP1-CUL1-F-box) E3 ubiquitin-protein ligase complex SCF(FBXL2) composed of CUL1, SKP1, RBX1 and FBXL2. Interacts with calmodulin; may antagonize substrate ubiquitination by SCF(FBXL2). May interact with PIK3R1. Interacts with PTPN13. Phosphorylated by GSK-beta (GSK3B), promoting recognition by FBXO3, leading to its ubiquitination by the SCF(FBXO3) complex. In terms of processing, ubiquitinated at Lys-201 by the SCF(FBXO3) complex in response to lipopolysaccharide (LPS), leading to its degradation by the proteasome.

The protein resides in the membrane. It participates in protein modification; protein ubiquitination. Calcium-activated substrate recognition component of the SCF (SKP1-cullin-F-box protein) E3 ubiquitin-protein ligase complex, SCF(FBXL2), which mediates the ubiquitination and subsequent proteasomal degradation of target proteins. Unlike many F-box proteins, FBXL2 does not seem to target phosphodegron within its substrates but rather calmodulin-binding motifs and is thereby antagonized by calmodulin. This is the case for the cyclins CCND2 and CCND3 which polyubiquitination and subsequent degradation are inhibited by calmodulin. Through CCND2 and CCND3 degradation induces cell-cycle arrest in G(0). SCF(FBXL2) also mediates PIK3R2 ubiquitination and proteasomal degradation thereby regulating phosphatidylinositol 3-kinase signaling and autophagy. PCYT1A monoubiquitination by SCF(FBXL2) and subsequent degradation regulates synthesis of phosphatidylcholine, which is utilized for formation of membranes and of pulmonary surfactant. The SCF(FBXL2) complex acts as a regulator of inflammation by mediating ubiquitination and degradation of TRAF proteins (TRAF1, TRAF2, TRAF3, TRAF4, TRAF5 and TRAF6). The SCF(FBXL2) complex acts as a negative regulator of the NLRP3 inflammasome by mediating ubiquitination and degradation of NLRP3. The chain is F-box/LRR-repeat protein 2 from Bos taurus (Bovine).